Here is a 97-residue protein sequence, read N- to C-terminus: Cystatin-A (97 aa).

M1 is subject to N-acetylmethionine. Positions 46–50 (QVVAG) match the Secondary area of contact motif.

The protein belongs to the cystatin family.

It is found in the cytoplasm. In terms of biological role, this is an intracellular thiol proteinase inhibitor. This chain is Cystatin-A (Csta), found in Mus musculus (Mouse).